The primary structure comprises 682 residues: Histone deacetylase 18 (682 aa).

Positions 59–382 (KVGLVYDETM…SLACVQVLLE (324 aa)) are histone deacetylase. H191 acts as the Proton donor/acceptor in catalysis. The Zn(2+) site is built by D231, H233, and D324. Residues 430–608 (SAERNSADAL…DKELQEDRSR (179 aa)) are a coiled coil.

This sequence belongs to the histone deacetylase family. HD type 2 subfamily. Requires Zn(2+) as cofactor. Expressed in roots, stems, young rosette leaves, flowers and siliques.

Its subcellular location is the nucleus. The protein resides in the cytoplasm. It catalyses the reaction N(6)-acetyl-L-lysyl-[histone] + H2O = L-lysyl-[histone] + acetate. Responsible for the deacetylation of lysine residues on the N-terminal part of the core histones (H2A, H2B, H3 and H4). Histone deacetylation gives a tag for epigenetic repression and plays an important role in transcriptional regulation, cell cycle progression and developmental events. Histone deacetylases act via the formation of large multiprotein complexes. Required for appropriate cellular patterning in the root epidermis. Involved in the differentiation of hair and non-hair cells in the root epidermis. Is not directly involved in the regulation of the expression of pattern genes. Regulates the transcription of certain kinase genes, which are components of a positional information relay system, by changing their histone acetylation status. The polypeptide is Histone deacetylase 18 (Arabidopsis thaliana (Mouse-ear cress)).